The chain runs to 249 residues: Putative [LysW]-aminoadipate/[LysW]-glutamate kinase (249 aa).

Substrate contacts are provided by arginine 64 and asparagine 166.

This sequence belongs to the acetylglutamate kinase family. LysZ subfamily.

The protein localises to the cytoplasm. It carries out the reaction [amino-group carrier protein]-C-terminal-N-(1,4-dicarboxybutan-1-yl)-L-glutamine + ATP = [amino-group carrier protein]-C-terminal-N-(1-carboxy-5-phosphooxy-5-oxopentan-1-yl)-L-glutamine + ADP. It catalyses the reaction [amino-group carrier protein]-C-terminal-gamma-(L-glutamyl)-L-glutamate + ATP = [amino-group carrier protein]-C-terminal-gamma-(5-phospho-L-glutamyl)-L-glutamate + ADP. It functions in the pathway amino-acid biosynthesis; L-lysine biosynthesis via AAA pathway; L-lysine from L-alpha-aminoadipate (Thermus route): step 2/5. The protein operates within amino-acid biosynthesis; L-arginine biosynthesis. Its function is as follows. Involved in both the arginine and lysine biosynthetic pathways. Phosphorylates the LysW-bound precursors glutamate (for arginine biosynthesis), respectively alpha-aminoadipate (for lysine biosynthesis). The chain is Putative [LysW]-aminoadipate/[LysW]-glutamate kinase from Pyrococcus horikoshii (strain ATCC 700860 / DSM 12428 / JCM 9974 / NBRC 100139 / OT-3).